The sequence spans 88 residues: MALKERVGTVVSDKMDKTVVVAVENRFPHPIYQKTVSRTTRYKAHDENNSVRVGDRVRITETRPLSRHKRWAVAEVLSHSPKAEEAKK.

This sequence belongs to the universal ribosomal protein uS17 family. Part of the 30S ribosomal subunit.

In terms of biological role, one of the primary rRNA binding proteins, it binds specifically to the 5'-end of 16S ribosomal RNA. The polypeptide is Small ribosomal subunit protein uS17 (Synechococcus sp. (strain WH7803)).